We begin with the raw amino-acid sequence, 384 residues long: Alanine racemase (384 aa).

Residue K39 is the Proton acceptor; specific for D-alanine of the active site. The residue at position 39 (K39) is an N6-(pyridoxal phosphate)lysine. R138 serves as a coordination point for substrate. Y265 functions as the Proton acceptor; specific for L-alanine in the catalytic mechanism. Position 312 (M312) interacts with substrate.

It belongs to the alanine racemase family. The cofactor is pyridoxal 5'-phosphate.

The enzyme catalyses L-alanine = D-alanine. Its pathway is amino-acid biosynthesis; D-alanine biosynthesis; D-alanine from L-alanine: step 1/1. Functionally, catalyzes the interconversion of L-alanine and D-alanine. May also act on other amino acids. This is Alanine racemase (alr) from Staphylococcus carnosus (strain TM300).